A 419-amino-acid chain; its full sequence is Hyaluronan synthase (419 aa).

5 consecutive transmembrane segments (helical) span residues 8 to 28 (LIVLSFIFLISILIYLNMYLF), 33 to 53 (VGIYGVILITYLVIKLGLSFL), 318 to 338 (IVALWTIFEVVMFMMLIVAIG), 345 to 365 (AIQLDLIKLFAFLSIIFIVAL), and 376 to 396 (PASFLLSPLYGILHLFVLQPL).

Belongs to the NodC/HAS family. Mg(2+) is required as a cofactor.

The protein resides in the cell membrane. The catalysed reaction is [hyaluronan](n) + UDP-N-acetyl-alpha-D-glucosamine = N-acetyl-beta-D-glucosaminyl-(1-&gt;4)-[hyaluronan](n) + UDP + H(+). It carries out the reaction N-acetyl-beta-D-glucosaminyl-(1-&gt;4)-[hyaluronan](n) + UDP-alpha-D-glucuronate = [hyaluronan](n+1) + UDP + H(+). It participates in glycan biosynthesis; hyaluronan biosynthesis. Its function is as follows. Glycosaminoglycan synthesis. The hyaluronic acid capsule is involved in the pathogenicity of group A Streptococci; it may be the major virulence determinant. This Streptococcus pyogenes serotype M1 protein is Hyaluronan synthase (hasA).